Consider the following 730-residue polypeptide: Aspyridones cluster regulator apdR (730 aa).

Residues 20-46 (CTECRRRKIRCDQATPCRHCEKAALRC) constitute a DNA-binding region (zn(2)-C6 fungal-type).

The protein resides in the nucleus. Functionally, transcription factor involved in regulation of gene cluster that mediates the biosynthesis of aspyridones. In Emericella nidulans (strain FGSC A4 / ATCC 38163 / CBS 112.46 / NRRL 194 / M139) (Aspergillus nidulans), this protein is Aspyridones cluster regulator apdR.